Consider the following 177-residue polypeptide: Large ribosomal subunit protein uL6 (177 aa).

The protein belongs to the universal ribosomal protein uL6 family. In terms of assembly, part of the 50S ribosomal subunit.

This protein binds to the 23S rRNA, and is important in its secondary structure. It is located near the subunit interface in the base of the L7/L12 stalk, and near the tRNA binding site of the peptidyltransferase center. The polypeptide is Large ribosomal subunit protein uL6 (Allorhizobium ampelinum (strain ATCC BAA-846 / DSM 112012 / S4) (Agrobacterium vitis (strain S4))).